A 348-amino-acid polypeptide reads, in one-letter code: Protein RecA (348 aa).

66–73 (GPESSGKT) contacts ATP.

It belongs to the RecA family.

It is found in the cytoplasm. Functionally, can catalyze the hydrolysis of ATP in the presence of single-stranded DNA, the ATP-dependent uptake of single-stranded DNA by duplex DNA, and the ATP-dependent hybridization of homologous single-stranded DNAs. It interacts with LexA causing its activation and leading to its autocatalytic cleavage. The sequence is that of Protein RecA from Neisseria meningitidis serogroup A / serotype 4A (strain DSM 15465 / Z2491).